The chain runs to 347 residues: GMP reductase (347 aa).

108–131 (ADFEKTKQILDLNPALNFVCIDVA) is a binding site for NADP(+). 2 residues coordinate K(+): glycine 181 and glycine 183. Catalysis depends on cysteine 186, which acts as the Thioimidate intermediate. An NADP(+)-binding site is contributed by 216–239 (IVSDGGCTTPGDVAKAFGGGADFV).

It belongs to the IMPDH/GMPR family. GuaC type 1 subfamily. As to quaternary structure, homotetramer.

It catalyses the reaction IMP + NH4(+) + NADP(+) = GMP + NADPH + 2 H(+). Catalyzes the irreversible NADPH-dependent deamination of GMP to IMP. It functions in the conversion of nucleobase, nucleoside and nucleotide derivatives of G to A nucleotides, and in maintaining the intracellular balance of A and G nucleotides. The polypeptide is GMP reductase (Shigella boydii serotype 4 (strain Sb227)).